Here is a 261-residue protein sequence, read N- to C-terminus: Putative [LysW]-aminoadipate/[LysW]-glutamate kinase (261 aa).

Residues Gly-35–Gly-36, Arg-62, and Asn-162 each bind substrate.

The protein belongs to the acetylglutamate kinase family. LysZ subfamily.

It localises to the cytoplasm. It catalyses the reaction [amino-group carrier protein]-C-terminal-N-(1,4-dicarboxybutan-1-yl)-L-glutamine + ATP = [amino-group carrier protein]-C-terminal-N-(1-carboxy-5-phosphooxy-5-oxopentan-1-yl)-L-glutamine + ADP. It carries out the reaction [amino-group carrier protein]-C-terminal-gamma-(L-glutamyl)-L-glutamate + ATP = [amino-group carrier protein]-C-terminal-gamma-(5-phospho-L-glutamyl)-L-glutamate + ADP. The protein operates within amino-acid biosynthesis; L-lysine biosynthesis via AAA pathway; L-lysine from L-alpha-aminoadipate (Thermus route): step 2/5. It functions in the pathway amino-acid biosynthesis; L-arginine biosynthesis. Functionally, involved in both the arginine and lysine biosynthetic pathways. Phosphorylates the LysW-bound precursors glutamate (for arginine biosynthesis), respectively alpha-aminoadipate (for lysine biosynthesis). The polypeptide is Putative [LysW]-aminoadipate/[LysW]-glutamate kinase (Pyrobaculum aerophilum (strain ATCC 51768 / DSM 7523 / JCM 9630 / CIP 104966 / NBRC 100827 / IM2)).